Consider the following 351-residue polypeptide: Dihydroorotate dehydrogenase (quinone) (351 aa).

Residues 61 to 65 and Thr-85 each bind FMN; that span reads AGLDK. Lys-65 is a binding site for substrate. A substrate-binding site is contributed by 110-114; that stretch reads NRMGF. Asn-139 and Asn-172 together coordinate FMN. Residue Asn-172 participates in substrate binding. The active-site Nucleophile is Ser-175. Position 177 (Asn-177) interacts with substrate. Lys-217 and Thr-245 together coordinate FMN. Residue 246–247 participates in substrate binding; that stretch reads NT. FMN-binding positions include Gly-268, Gly-297, and 318–319; that span reads YS.

It belongs to the dihydroorotate dehydrogenase family. Type 2 subfamily. Monomer. FMN serves as cofactor.

It localises to the cell membrane. It catalyses the reaction (S)-dihydroorotate + a quinone = orotate + a quinol. Its pathway is pyrimidine metabolism; UMP biosynthesis via de novo pathway; orotate from (S)-dihydroorotate (quinone route): step 1/1. In terms of biological role, catalyzes the conversion of dihydroorotate to orotate with quinone as electron acceptor. The sequence is that of Dihydroorotate dehydrogenase (quinone) from Xanthomonas oryzae pv. oryzae (strain PXO99A).